We begin with the raw amino-acid sequence, 780 residues long: Elongation factor G-2, chloroplastic (780 aa).

Residues 1–79 (MAAESSLRVA…PRRNFSVFAM (79 aa)) constitute a chloroplast transit peptide. The region spanning 91-366 (KDYRNIGIMA…AVVDYLPSPL (276 aa)) is the tr-type G domain. GTP is bound by residues 100 to 107 (AHIDAGKT), 164 to 168 (DTPGH), and 218 to 221 (NKMD).

This sequence belongs to the TRAFAC class translation factor GTPase superfamily. Classic translation factor GTPase family. EF-G/EF-2 subfamily.

The protein localises to the plastid. The protein resides in the chloroplast. Its pathway is protein biosynthesis; polypeptide chain elongation. Chloroplast-localized elongation factor EF-G involved in protein synthesis in plastids. Catalyzes the GTP-dependent ribosomal translocation step during translation elongation. During this step, the ribosome changes from the pre-translocational (PRE) to the post-translocational (POST) state as the newly formed A-site-bound peptidyl-tRNA and P-site-bound deacylated tRNA move to the P and E sites, respectively. Catalyzes the coordinated movement of the two tRNA molecules, the mRNA and conformational changes in the ribosome. This is Elongation factor G-2, chloroplastic (fusA2) from Glycine max (Soybean).